Consider the following 218-residue polypeptide: Elongation factor Ts (218 aa).

Positions 82-85 are involved in Mg(2+) ion dislocation from EF-Tu; it reads TDFV.

The protein belongs to the EF-Ts family.

It is found in the cytoplasm. In terms of biological role, associates with the EF-Tu.GDP complex and induces the exchange of GDP to GTP. It remains bound to the aminoacyl-tRNA.EF-Tu.GTP complex up to the GTP hydrolysis stage on the ribosome. The chain is Elongation factor Ts from Prochlorococcus marinus (strain MIT 9313).